A 273-amino-acid chain; its full sequence is Glutamate 5-kinase (273 aa).

ATP is bound at residue Lys-15. Substrate is bound by residues Ser-55, Asp-142, and Asn-158. ATP is bound by residues 178–179 and 220–226; these read SD and TGGMLSK.

This sequence belongs to the glutamate 5-kinase family.

The protein resides in the cytoplasm. It carries out the reaction L-glutamate + ATP = L-glutamyl 5-phosphate + ADP. The protein operates within amino-acid biosynthesis; L-proline biosynthesis; L-glutamate 5-semialdehyde from L-glutamate: step 1/2. Catalyzes the transfer of a phosphate group to glutamate to form L-glutamate 5-phosphate. The protein is Glutamate 5-kinase of Streptococcus pyogenes serotype M18 (strain MGAS8232).